A 426-amino-acid polypeptide reads, in one-letter code: Endoglucanase (426 aa).

An N-terminal signal peptide occupies residues M1–G19. C20 is lipidated: N-palmitoyl cysteine. The S-diacylglycerol cysteine moiety is linked to residue C20. A propeptide spanning residues C20–A45 is cleaved from the precursor. E249 acts as the Proton donor in catalysis. The active-site Nucleophile is the E361.

This sequence belongs to the glycosyl hydrolase 5 (cellulase A) family.

The protein localises to the cell membrane. It carries out the reaction Endohydrolysis of (1-&gt;4)-beta-D-glucosidic linkages in cellulose, lichenin and cereal beta-D-glucans.. The chain is Endoglucanase (egl) from Ralstonia solanacearum (Pseudomonas solanacearum).